The following is a 492-amino-acid chain: Phytoene desaturase (lycopene-forming) (492 aa).

5 to 38 serves as a coordination point for FAD; that stretch reads VVIGAGFGGLALAIRLQAAGIPTVLLEQRDKPGG.

It belongs to the carotenoid/retinoid oxidoreductase family. FAD is required as a cofactor.

It catalyses the reaction 15-cis-phytoene + 4 A = all-trans-lycopene + 4 AH2. The protein operates within carotenoid biosynthesis; lycopene biosynthesis. Its function is as follows. This enzyme converts phytoene into lycopene via the intermediaries of phytofluene, zeta-carotene and neurosporene by the introduction of four double bonds. The polypeptide is Phytoene desaturase (lycopene-forming) (crtI) (Pseudescherichia vulneris (Escherichia vulneris)).